The following is a 245-amino-acid chain: 8-amino-3,8-dideoxy-manno-octulosonate cytidylyltransferase (245 aa).

This sequence belongs to the KdsB family.

The protein localises to the cytoplasm. It carries out the reaction 8-amino-3,8-dideoxy-alpha-D-manno-octulosonate + CTP = CMP-8-amino-3,8-dideoxy-alpha-D-manno-oct-2-ulosonate + diphosphate. The protein operates within bacterial outer membrane biogenesis; lipopolysaccharide biosynthesis. Functionally, activates KDO8N (a required 8-carbon sugar) for incorporation into bacterial lipopolysaccharide in the Shewanella genus. This Shewanella amazonensis (strain ATCC BAA-1098 / SB2B) protein is 8-amino-3,8-dideoxy-manno-octulosonate cytidylyltransferase.